A 246-amino-acid chain; its full sequence is MKRPPVPLLQNGVRADGRTPDQMREVKIAVGVVSNADGSAMVSYGATTAVAAVYGPREMHPRHLSLPDRGVMRVRYHMAPFSTKDERKSPTPSRREIEISKILREALEPAIVLEQYPRSRIDVFVEILQADGSTRVASLTAASLALADAGIYMRDLVVGVSVGLVDGTVVLDLNGLEDQYGEGDLPLGYMPNLKRFTLLQLDGAWTRDMFLQALNLAVRGAEYVYQIARDALKNKYMSIAEEIYGR.

It belongs to the RNase PH family. Rrp41 subfamily. In terms of assembly, component of the archaeal exosome complex. Forms a hexameric ring-like arrangement composed of 3 Rrp41-Rrp42 heterodimers. The hexameric ring associates with a trimer of Rrp4 and/or Csl4 subunits.

The protein resides in the cytoplasm. Functionally, catalytic component of the exosome, which is a complex involved in RNA degradation. Has 3'-&gt;5' exoribonuclease activity. Can also synthesize heteromeric RNA-tails. This is Exosome complex component Rrp41 from Pyrobaculum aerophilum (strain ATCC 51768 / DSM 7523 / JCM 9630 / CIP 104966 / NBRC 100827 / IM2).